The primary structure comprises 352 residues: CD5 antigen-like (352 aa).

The signal sequence occupies residues 1–21 (MAPLFNLMLAILSIFVGSCFS). SRCR domains follow at residues 27-128 (VQLV…AQCE), 141-241 (VRLV…MECE), and 246-348 (LKLV…VICT). 11 cysteine pairs are disulfide-bonded: Cys36–Cys70, Cys52–Cys117, Cys65–Cys127, Cys98–Cys108, Cys166–Cys230, Cys179–Cys240, Cys211–Cys221, Cys255–Cys289, Cys271–Cys337, Cys284–Cys347, and Cys317–Cys327. Asn99 carries an N-linked (GlcNAc...) asparagine glycan. N-linked (GlcNAc...) asparagine glycosylation occurs at Asn229.

In terms of assembly, interacts with FASN; the interaction is direct. Interacts (via SRCR2 and SRCR3) with pentameric IgM (via Fc region); disulfide-linked. N-glycosylated. N-glycan at Asn-99 possesses only alpha2,6-sialylated terminals, while Asn-229 possesses both alpha2,6-sialylated and non-sialylated terminals. N-glycosylation increases secretion. In terms of tissue distribution, specifically expressed in tissue macrophages. Expressed in thymus, liver, spleen and lymph nodes. Present in Th17 cells; mainly present in non-pathogenic Th17 cells.

The protein resides in the secreted. It localises to the cytoplasm. Secreted protein that acts as a key regulator of lipid synthesis: mainly expressed by macrophages in lymphoid and inflamed tissues and regulates mechanisms in inflammatory responses, such as infection or atherosclerosis. Able to inhibit lipid droplet size in adipocytes. Following incorporation into mature adipocytes via CD36-mediated endocytosis, associates with cytosolic FASN, inhibiting fatty acid synthase activity and leading to lipolysis, the degradation of triacylglycerols into glycerol and free fatty acids (FFA). CD5L-induced lipolysis occurs with progression of obesity: participates in obesity-associated inflammation following recruitment of inflammatory macrophages into adipose tissues, a cause of insulin resistance and obesity-related metabolic disease. Regulation of intracellular lipids mediated by CD5L has a direct effect on transcription regulation mediated by nuclear receptors ROR-gamma (RORC). Acts as a key regulator of metabolic switch in T-helper Th17 cells. Regulates the expression of pro-inflammatory genes in Th17 cells by altering the lipid content and limiting synthesis of cholesterol ligand of RORC, the master transcription factor of Th17-cell differentiation. CD5L is mainly present in non-pathogenic Th17 cells, where it decreases the content of polyunsaturated fatty acyls (PUFA), affecting two metabolic proteins MSMO1 and CYP51A1, which synthesize ligands of RORC, limiting RORC activity and expression of pro-inflammatory genes. Participates in obesity-associated autoimmunity via its association with IgM, interfering with the binding of IgM to Fcalpha/mu receptor and enhancing the development of long-lived plasma cells that produce high-affinity IgG autoantibodies. Also acts as an inhibitor of apoptosis in macrophages: promotes macrophage survival from the apoptotic effects of oxidized lipids in case of atherosclerosis. Involved in early response to microbial infection against various pathogens by acting as a pattern recognition receptor and by promoting autophagy. The sequence is that of CD5 antigen-like (Cd5l) from Mus musculus (Mouse).